A 213-amino-acid polypeptide reads, in one-letter code: Octanoyltransferase (213 aa).

The region spanning 28–203 (GTSPETLLLL…RFPFLLDERL (176 aa)) is the BPL/LPL catalytic domain. Substrate-binding positions include 66 to 73 (RGGDVTFH), 133 to 135 (SIG), and 146 to 148 (GFA). Residue C164 is the Acyl-thioester intermediate of the active site.

Belongs to the LipB family.

It is found in the cytoplasm. The catalysed reaction is octanoyl-[ACP] + L-lysyl-[protein] = N(6)-octanoyl-L-lysyl-[protein] + holo-[ACP] + H(+). It participates in protein modification; protein lipoylation via endogenous pathway; protein N(6)-(lipoyl)lysine from octanoyl-[acyl-carrier-protein]: step 1/2. Catalyzes the transfer of endogenously produced octanoic acid from octanoyl-acyl-carrier-protein onto the lipoyl domains of lipoate-dependent enzymes. Lipoyl-ACP can also act as a substrate although octanoyl-ACP is likely to be the physiological substrate. The chain is Octanoyltransferase from Geobacter metallireducens (strain ATCC 53774 / DSM 7210 / GS-15).